Consider the following 642-residue polypeptide: Probable serine/threonine-protein kinase drkA (642 aa).

The first 23 residues, 1-23 (MKKLPFLIIIIYIFLILISISSS), serve as a signal peptide directing secretion. The Extracellular portion of the chain corresponds to 24 to 322 (IDYNYNNDID…KPTISLLKKY (299 aa)). Residues 106–128 (SENSGSGSNSNSNSKNTDSSTGP) show a composition bias toward low complexity. Positions 106 to 136 (SENSGSGSNSNSNSKNTDSSTGPTPSPISIN) are disordered. 5 N-linked (GlcNAc...) asparagine glycosylation sites follow: Asn136, Asn140, Asn158, Asn244, and Asn271. The helical transmembrane segment at 323–343 (LIIGFSIVGGLLIIGGCFLLI) threads the bilayer. Topologically, residues 344–642 (RNRYRSSGYY…SDLQYVRQQL (299 aa)) are cytoplasmic. Residues 374–627 (IKIGVRIGKG…EQCLERLESI (254 aa)) form the Protein kinase domain. ATP contacts are provided by residues 380-388 (IGKGNYGEV) and Lys401. The active-site Proton acceptor is the Asp497.

Belongs to the protein kinase superfamily. TKL Ser/Thr protein kinase family.

It localises to the membrane. The catalysed reaction is L-seryl-[protein] + ATP = O-phospho-L-seryl-[protein] + ADP + H(+). The enzyme catalyses L-threonyl-[protein] + ATP = O-phospho-L-threonyl-[protein] + ADP + H(+). This Dictyostelium discoideum (Social amoeba) protein is Probable serine/threonine-protein kinase drkA (drkA).